The primary structure comprises 317 residues: Ribosomal protein L11 methyltransferase (317 aa).

Residues Thr-158, Gly-179, Asp-201, and Asn-244 each coordinate S-adenosyl-L-methionine.

This sequence belongs to the methyltransferase superfamily. PrmA family.

The protein resides in the cytoplasm. The catalysed reaction is L-lysyl-[protein] + 3 S-adenosyl-L-methionine = N(6),N(6),N(6)-trimethyl-L-lysyl-[protein] + 3 S-adenosyl-L-homocysteine + 3 H(+). Its function is as follows. Methylates ribosomal protein L11. In Streptococcus mutans serotype c (strain ATCC 700610 / UA159), this protein is Ribosomal protein L11 methyltransferase.